The sequence spans 414 residues: Cytochrome c-554 (414 aa).

A signal peptide spans 1-24; that stretch reads MQSSRPSDRQLAIVVSVAVGIVVA. Residues Met110, Cys131, Cys134, His135, Met154, Cys179, Cys182, His183, Met283, Cys294, Cys297, His298, Cys378, Cys381, and His382 each coordinate heme.

Binds 4 heme groups per subunit. In terms of processing, the N-terminus is blocked.

The protein localises to the periplasm. In terms of biological role, serves as the immediate electron donor to the oxidized BChl2 (bacteriochlorophyll dimer) that is oxidized in the first step of light-induced charge separation. Can also oxidize low-potential substrates. The sequence is that of Cytochrome c-554 (puf2C) from Chloroflexus aurantiacus (strain ATCC 29366 / DSM 635 / J-10-fl).